The primary structure comprises 197 residues: Imidazoleglycerol-phosphate dehydratase (197 aa).

This sequence belongs to the imidazoleglycerol-phosphate dehydratase family.

It is found in the cytoplasm. The catalysed reaction is D-erythro-1-(imidazol-4-yl)glycerol 3-phosphate = 3-(imidazol-4-yl)-2-oxopropyl phosphate + H2O. The protein operates within amino-acid biosynthesis; L-histidine biosynthesis; L-histidine from 5-phospho-alpha-D-ribose 1-diphosphate: step 6/9. The sequence is that of Imidazoleglycerol-phosphate dehydratase from Rhodopseudomonas palustris (strain BisA53).